Reading from the N-terminus, the 392-residue chain is Alanine--glyoxylate aminotransferase (392 aa).

Position 209 is an N6-(pyridoxal phosphate)lysine (Lys-209). Position 225 is an N6-acetyllysine; alternate (Lys-225). Lys-225 bears the N6-succinyllysine; alternate mark. 2 positions are modified to N6-acetyllysine: Lys-234 and Lys-312. A substrate-binding site is contributed by Arg-360. The short motif at 390–392 (KKL) is the Microbody targeting signal element.

The protein belongs to the class-V pyridoxal-phosphate-dependent aminotransferase family. In terms of assembly, homodimer. The cofactor is pyridoxal 5'-phosphate.

Its subcellular location is the peroxisome. The enzyme catalyses L-serine + pyruvate = 3-hydroxypyruvate + L-alanine. The catalysed reaction is glyoxylate + L-alanine = glycine + pyruvate. Peroxisomal aminotransferase that catalyzes the transamination of glyoxylate to glycine and contributes to the glyoxylate detoxification. Also catalyzes the transamination between L-serine and pyruvate and contributes to gluconeogenesis from the L-serine metabolism. The protein is Alanine--glyoxylate aminotransferase of Pongo abelii (Sumatran orangutan).